The chain runs to 305 residues: UDP-3-O-acyl-N-acetylglucosamine deacetylase (305 aa).

The Zn(2+) site is built by His-78, His-237, and Asp-241. Residue His-264 is the Proton donor of the active site.

The protein belongs to the LpxC family. The cofactor is Zn(2+).

The catalysed reaction is a UDP-3-O-[(3R)-3-hydroxyacyl]-N-acetyl-alpha-D-glucosamine + H2O = a UDP-3-O-[(3R)-3-hydroxyacyl]-alpha-D-glucosamine + acetate. Its pathway is glycolipid biosynthesis; lipid IV(A) biosynthesis; lipid IV(A) from (3R)-3-hydroxytetradecanoyl-[acyl-carrier-protein] and UDP-N-acetyl-alpha-D-glucosamine: step 2/6. Its function is as follows. Catalyzes the hydrolysis of UDP-3-O-myristoyl-N-acetylglucosamine to form UDP-3-O-myristoylglucosamine and acetate, the committed step in lipid A biosynthesis. The polypeptide is UDP-3-O-acyl-N-acetylglucosamine deacetylase (Paraburkholderia phymatum (strain DSM 17167 / CIP 108236 / LMG 21445 / STM815) (Burkholderia phymatum)).